A 131-amino-acid polypeptide reads, in one-letter code: M-zodatoxin-Lt8m (131 aa).

An N-terminal signal peptide occupies residues 1 to 20; the sequence is MKYFVVALALVAAFACIAES. Positions 21-60 are excised as a propeptide; it reads KPAESEHELAEVEEENELADLEDAVWLEHLADLSDLEEAR.

Belongs to the cationic peptide 06 (cytoinsectotoxin) family. In terms of tissue distribution, expressed by the venom gland.

The protein localises to the secreted. Functionally, insecticidal, cytolytic and antimicrobial peptide. Forms voltage-dependent, ion-permeable channels in membranes. At high concentration causes cell membrane lysis. This is M-zodatoxin-Lt8m (cit 1-13) from Lachesana tarabaevi (Spider).